We begin with the raw amino-acid sequence, 371 residues long: Chaperone protein DnaJ (371 aa).

One can recognise a J domain in the interval Cys5–Gly70. The CR-type zinc-finger motif lies at Gly127 to Gln204. Positions 140, 143, 156, 159, 178, 181, 192, and 195 each coordinate Zn(2+). 4 CXXCXGXG motif repeats span residues Cys140–Gly147, Cys156–Gly163, Cys178–Gly185, and Cys192–Gly199.

It belongs to the DnaJ family. In terms of assembly, homodimer. Requires Zn(2+) as cofactor.

The protein localises to the cytoplasm. Participates actively in the response to hyperosmotic and heat shock by preventing the aggregation of stress-denatured proteins and by disaggregating proteins, also in an autonomous, DnaK-independent fashion. Unfolded proteins bind initially to DnaJ; upon interaction with the DnaJ-bound protein, DnaK hydrolyzes its bound ATP, resulting in the formation of a stable complex. GrpE releases ADP from DnaK; ATP binding to DnaK triggers the release of the substrate protein, thus completing the reaction cycle. Several rounds of ATP-dependent interactions between DnaJ, DnaK and GrpE are required for fully efficient folding. Also involved, together with DnaK and GrpE, in the DNA replication of plasmids through activation of initiation proteins. This chain is Chaperone protein DnaJ, found in Francisella tularensis subsp. holarctica (strain LVS).